The following is a 221-amino-acid chain: UPF0758 protein YicR (221 aa).

Residues 99–221 form the MPN domain; it reads ALLSPEMTLE…YVSFAERGWI (123 aa). Residues histidine 170, histidine 172, and aspartate 183 each contribute to the Zn(2+) site. The JAMM motif signature appears at 170–183; that stretch reads HNHPSGCAEPSKAD.

Belongs to the UPF0758 family. YicR subfamily.

The polypeptide is UPF0758 protein YicR (Salmonella arizonae (strain ATCC BAA-731 / CDC346-86 / RSK2980)).